We begin with the raw amino-acid sequence, 565 residues long: Glycine/sarcosine/dimethylglycine N-methyltransferase (565 aa).

Basic and acidic residues predominate over residues 1 to 10 (MTKSVDDLAR). Positions 1–34 (MTKSVDDLARGDQAGDEQDPVHREQQTFGDNPLE) are disordered. Residues Y45, W53, R62, A86, D107, 134 to 135 (DW), and L152 contribute to the S-adenosyl-L-methionine site. Positions 154, 187, and 226 each coordinate substrate.

The protein belongs to the class I-like SAM-binding methyltransferase superfamily. Glycine N-methyltransferase family. As to quaternary structure, monomer.

The catalysed reaction is glycine + 2 S-adenosyl-L-methionine = N,N-dimethylglycine + 2 S-adenosyl-L-homocysteine + 2 H(+). It carries out the reaction sarcosine + 2 S-adenosyl-L-methionine = glycine betaine + 2 S-adenosyl-L-homocysteine + 2 H(+). It catalyses the reaction glycine + S-adenosyl-L-methionine = sarcosine + S-adenosyl-L-homocysteine + H(+). The enzyme catalyses sarcosine + S-adenosyl-L-methionine = N,N-dimethylglycine + S-adenosyl-L-homocysteine + H(+). The catalysed reaction is N,N-dimethylglycine + S-adenosyl-L-methionine = glycine betaine + S-adenosyl-L-homocysteine + H(+). Its pathway is amine and polyamine biosynthesis; betaine biosynthesis via glycine pathway; betaine from glycine: step 1/3. It functions in the pathway amine and polyamine biosynthesis; betaine biosynthesis via glycine pathway; betaine from glycine: step 2/3. It participates in amine and polyamine biosynthesis; betaine biosynthesis via glycine pathway; betaine from glycine: step 3/3. Functionally, catalyzes the methylation of glycine, sarcosine and dimethylglycine to sarcosine, dimethylglycine and betaine, respectively, with S-adenosylmethionine (AdoMet) acting as the methyl donor. Shows low level of activity on glycine when expressed in E.coli. This chain is Glycine/sarcosine/dimethylglycine N-methyltransferase, found in Actinopolyspora halophila.